Here is a 224-residue protein sequence, read N- to C-terminus: Non-structural protein V (224 aa).

The segment covering Lys-55–Gln-65 has biased composition (polar residues). Disordered regions lie at residues Lys-55–Gly-90 and Thr-145–Arg-172. Zn(2+)-binding residues include His-170, Cys-189, Cys-193, Cys-205, Cys-207, Cys-210, Cys-214, and Cys-217.

Belongs to the paramyxoviruses V protein family. Interacts with host IFIH1/MDA5 and DHX58/LGP2. Forms with host DDB1, CUL4A, STAT1, STAT2 and STAT3 the mumps virus V-dependent complex (VDC).

It is found in the virion. It localises to the host cytoplasm. Plays an essential role in the inhibition of host immune response. Prevents the establishment of cellular antiviral state by blocking interferon-alpha/beta (IFN-alpha/beta) production and signaling pathway. Interacts with host IFIH1/MDA5 and DHX58/LGP2 to inhibit the transduction pathway involved in the activation of IFN-beta promoter, thus protecting the virus against cell antiviral state. Blocks the type I and II interferon signaling pathways by interacting with host STAT1, STAT2 and STAT3, and mediating their ubiquitination and subsequent proteasomal degradation. The chain is Non-structural protein V from Mumps virus genotype B (strain Miyahara vaccine) (MuV).